We begin with the raw amino-acid sequence, 529 residues long: uncharacterized protein (529 aa).

This sequence to M.jannaschii MJ1451.

This is an uncharacterized protein from Methanothermobacter thermautotrophicus (strain ATCC 29096 / DSM 1053 / JCM 10044 / NBRC 100330 / Delta H) (Methanobacterium thermoautotrophicum).